The following is a 124-amino-acid chain: Small ribosomal subunit protein uS12 (124 aa).

Positions 9–28 are disordered; that stretch reads RTERQTLSRKTKSPALRSCP. The residue at position 89 (D89) is a 3-methylthioaspartic acid. The tract at residues 104 to 124 is disordered; that stretch reads TAGVKDRRQSRSKYGAKAPKE.

This sequence belongs to the universal ribosomal protein uS12 family. As to quaternary structure, part of the 30S ribosomal subunit. Contacts proteins S8 and S17. May interact with IF1 in the 30S initiation complex.

In terms of biological role, with S4 and S5 plays an important role in translational accuracy. Interacts with and stabilizes bases of the 16S rRNA that are involved in tRNA selection in the A site and with the mRNA backbone. Located at the interface of the 30S and 50S subunits, it traverses the body of the 30S subunit contacting proteins on the other side and probably holding the rRNA structure together. The combined cluster of proteins S8, S12 and S17 appears to hold together the shoulder and platform of the 30S subunit. The polypeptide is Small ribosomal subunit protein uS12 (Synechococcus sp. (strain RCC307)).